We begin with the raw amino-acid sequence, 180 residues long: RNA polymerase sigma-E factor (180 aa).

The short motif at 36–49 is the Polymerase core binding element; the sequence is DLLQTALARTYGRW. Positions 130 to 149 form a DNA-binding region, H-T-H motif; it reads TEETAAALGMSAGTVKSTLH.

This sequence belongs to the sigma-70 factor family. ECF subfamily.

The protein resides in the cytoplasm. Functionally, sigma factors are initiation factors that promote the attachment of RNA polymerase to specific initiation sites and are then released. This sigma factor is required for the synthesis of the antibiotic actinomycin. The chain is RNA polymerase sigma-E factor (sigE) from Streptomyces antibioticus.